The primary structure comprises 286 residues: MKLKAYAKINLALDVLSKREDGYHEIRTIMQTVDLYDIINIEKIEEDNIIVTTSSENIPTDNKNHAYIAASLLKERFGVKQGVRIHIEKNIPVSAGLAGGSTDAAAVLKGLNEIFELNLSEQQLMEIGREIGADVPFCLVGGTALCEGIGEKVIKLKSAPQMNILIAKPEVYVSTQAVYEALDLSKIKKRPNIEAMISAIEEGNVKEIAKNLCNVLEVVTVNQYPVINRVKDIMRNNNALGTVMTGSGPAVFGIFGNKYNALKAAERLKVFIKEIILTTTCEGSGF.

The active site involves Lys8. 92-102 (PVSAGLAGGST) is an ATP binding site. Asp134 is a catalytic residue.

The protein belongs to the GHMP kinase family. IspE subfamily.

It catalyses the reaction 4-CDP-2-C-methyl-D-erythritol + ATP = 4-CDP-2-C-methyl-D-erythritol 2-phosphate + ADP + H(+). The protein operates within isoprenoid biosynthesis; isopentenyl diphosphate biosynthesis via DXP pathway; isopentenyl diphosphate from 1-deoxy-D-xylulose 5-phosphate: step 3/6. In terms of biological role, catalyzes the phosphorylation of the position 2 hydroxy group of 4-diphosphocytidyl-2C-methyl-D-erythritol. The sequence is that of 4-diphosphocytidyl-2-C-methyl-D-erythritol kinase from Caldicellulosiruptor bescii (strain ATCC BAA-1888 / DSM 6725 / KCTC 15123 / Z-1320) (Anaerocellum thermophilum).